A 144-amino-acid chain; its full sequence is Large ribosomal subunit protein uL15 (144 aa).

The segment at 1–54 is disordered; that stretch reads MRLNTLSPAEGSKKAGKRLGRGIGSGLGKTGGRGHKGQKSRSGGGVRRGFEGGQ. Positions 21–31 are enriched in gly residues; it reads RGIGSGLGKTG.

This sequence belongs to the universal ribosomal protein uL15 family. In terms of assembly, part of the 50S ribosomal subunit.

Binds to the 23S rRNA. This is Large ribosomal subunit protein uL15 from Escherichia coli (strain K12 / MC4100 / BW2952).